The chain runs to 605 residues: Elongation factor 4 (605 aa).

In terms of domain architecture, tr-type G spans 11-193 (KCIRNFSIIA…QIVTRISPPQ (183 aa)). GTP-binding positions include 23-28 (DHGKST) and 140-143 (NKVD).

This sequence belongs to the TRAFAC class translation factor GTPase superfamily. Classic translation factor GTPase family. LepA subfamily.

Its subcellular location is the cell membrane. The enzyme catalyses GTP + H2O = GDP + phosphate + H(+). Required for accurate and efficient protein synthesis under certain stress conditions. May act as a fidelity factor of the translation reaction, by catalyzing a one-codon backward translocation of tRNAs on improperly translocated ribosomes. Back-translocation proceeds from a post-translocation (POST) complex to a pre-translocation (PRE) complex, thus giving elongation factor G a second chance to translocate the tRNAs correctly. Binds to ribosomes in a GTP-dependent manner. This is Elongation factor 4 from Aster yellows witches'-broom phytoplasma (strain AYWB).